A 181-amino-acid polypeptide reads, in one-letter code: MKKLAIVFTMLLIAGCSSSQDSANNQIDELGKENNSLFTFRNIQSGLMIHNGLHQHGRETIGWEIVPVKTPEEALVTDQSGWIMIRTPNTDQCLGTPDGRNLLKMTCNSTAKKTLFSLIPSTTGAVQIKSVLSGLCFLDSKNSGLSFETGKCIADFKKPFEVVPQSHLWMLNPLNTESPII.

Residues 1 to 15 (MKKLAIVFTMLLIAG) form the signal peptide. Residue cysteine 16 is the site of N-palmitoyl cysteine attachment. Cysteine 16 carries S-diacylglycerol cysteine lipidation. In terms of domain architecture, Ricin B-type lectin spans 79–181 (QSGWIMIRTP…NPLNTESPII (103 aa)).

As to quaternary structure, heterotrimer of 3 subunits, CdtA, CdtB and CdtC.

It localises to the cell outer membrane. Part of the tripartite complex that is required for the CDT activity. CdtC, along with CdtA, probably forms a heterodimeric subunit required for the delivery of CdtB. The polypeptide is Cytolethal distending toxin subunit C (cdtC) (Escherichia coli).